We begin with the raw amino-acid sequence, 176 residues long: Adenine phosphoribosyltransferase (176 aa).

It belongs to the purine/pyrimidine phosphoribosyltransferase family. In terms of assembly, homodimer.

Its subcellular location is the cytoplasm. It catalyses the reaction AMP + diphosphate = 5-phospho-alpha-D-ribose 1-diphosphate + adenine. It participates in purine metabolism; AMP biosynthesis via salvage pathway; AMP from adenine: step 1/1. Catalyzes a salvage reaction resulting in the formation of AMP, that is energically less costly than de novo synthesis. This chain is Adenine phosphoribosyltransferase, found in Leuconostoc mesenteroides subsp. mesenteroides (strain ATCC 8293 / DSM 20343 / BCRC 11652 / CCM 1803 / JCM 6124 / NCDO 523 / NBRC 100496 / NCIMB 8023 / NCTC 12954 / NRRL B-1118 / 37Y).